A 212-amino-acid chain; its full sequence is Large ribosomal subunit protein uL3 (212 aa).

At Gln153 the chain carries N5-methylglutamine.

It belongs to the universal ribosomal protein uL3 family. As to quaternary structure, part of the 50S ribosomal subunit. Forms a cluster with proteins L14 and L19. Methylated by PrmB.

Its function is as follows. One of the primary rRNA binding proteins, it binds directly near the 3'-end of the 23S rRNA, where it nucleates assembly of the 50S subunit. This chain is Large ribosomal subunit protein uL3, found in Shewanella loihica (strain ATCC BAA-1088 / PV-4).